The primary structure comprises 296 residues: Bifunctional protein FolD (296 aa).

Residues 168-170, threonine 197, and valine 238 contribute to the NADP(+) site; that span reads GRS.

Belongs to the tetrahydrofolate dehydrogenase/cyclohydrolase family. As to quaternary structure, homodimer.

It carries out the reaction (6R)-5,10-methylene-5,6,7,8-tetrahydrofolate + NADP(+) = (6R)-5,10-methenyltetrahydrofolate + NADPH. It catalyses the reaction (6R)-5,10-methenyltetrahydrofolate + H2O = (6R)-10-formyltetrahydrofolate + H(+). The protein operates within one-carbon metabolism; tetrahydrofolate interconversion. Catalyzes the oxidation of 5,10-methylenetetrahydrofolate to 5,10-methenyltetrahydrofolate and then the hydrolysis of 5,10-methenyltetrahydrofolate to 10-formyltetrahydrofolate. The sequence is that of Bifunctional protein FolD from Desulfotalea psychrophila (strain LSv54 / DSM 12343).